Here is a 122-residue protein sequence, read N- to C-terminus: Large ribosomal subunit protein uL22 (122 aa).

Residues 103–122 form a disordered region; the sequence is VEGKEMKSSKSHKKNQAEGK.

This sequence belongs to the universal ribosomal protein uL22 family. As to quaternary structure, part of the 50S ribosomal subunit.

In terms of biological role, this protein binds specifically to 23S rRNA; its binding is stimulated by other ribosomal proteins, e.g. L4, L17, and L20. It is important during the early stages of 50S assembly. It makes multiple contacts with different domains of the 23S rRNA in the assembled 50S subunit and ribosome. Functionally, the globular domain of the protein is located near the polypeptide exit tunnel on the outside of the subunit, while an extended beta-hairpin is found that lines the wall of the exit tunnel in the center of the 70S ribosome. The protein is Large ribosomal subunit protein uL22 of Helicobacter pylori (strain P12).